We begin with the raw amino-acid sequence, 30 residues long: Acyl-CoA-binding protein 1 (30 aa).

A compositionally biased stretch (basic and acidic residues) spans 1 to 15 (ALKDEFEEHAEKAKT). The disordered stretch occupies residues 1–30 (ALKDEFEEHAEKAKTLPENTSNENKLILYG). One can recognise an ACB domain in the interval 2–30 (LKDEFEEHAEKAKTLPENTSNENKLILYG).

Belongs to the ACBP family.

The protein resides in the cytoplasm. Functionally, binds medium- and long-chain acyl-CoA esters with very high affinity and may function as an intracellular carrier of acyl-CoA esters. This Digitalis lanata (Grecian foxglove) protein is Acyl-CoA-binding protein 1.